The primary structure comprises 396 residues: MAKGKFERTKPHVNVGTIGHVDHGKTTLTAAIATVLAKKFGGEAKGYDQIDNAPEEKARGITINTSHVEYETATRHYAHVDCPGHADYVKNMITGAAQMDGAILVCSAADGPMPQTREHILLARQVGVPYIIVFLNKCDMVDDEELLELVEMEVRELLDKYDFPGDDTPIIRGSAKLALEGDQSDKGEPAILRLAEALDTYIPTPERAVDGAFLMPVEDVFSISGRGTVVTGRVERGIIKVGEEIEIVGIRDTQKTTVTGVEMFRKLLDQGQAGDNVGLLLRGTKREDVERGQVLCKPGSIKPHTHFTAEVYVLSKDEGGRHTPFFNNYRPQFYFRTTDVTGSIELPADKEMVMPGDNVSITVKLINPIAMEEGLRFAIREGGRTVGAGVVAKIIA.

In terms of domain architecture, tr-type G spans 10–206 (KPHVNVGTIG…ALDTYIPTPE (197 aa)). Residues 19–26 (GHVDHGKT) form a G1 region. 19-26 (GHVDHGKT) is a binding site for GTP. Mg(2+) is bound at residue T26. The interval 60 to 64 (GITIN) is G2. Positions 81–84 (DCPG) are G3. Residues 81–85 (DCPGH) and 136–139 (NKCD) each bind GTP. Residues 136 to 139 (NKCD) are G4. Residues 174–176 (SAK) form a G5 region.

The protein belongs to the TRAFAC class translation factor GTPase superfamily. Classic translation factor GTPase family. EF-Tu/EF-1A subfamily. Monomer.

Its subcellular location is the cytoplasm. The enzyme catalyses GTP + H2O = GDP + phosphate + H(+). Functionally, GTP hydrolase that promotes the GTP-dependent binding of aminoacyl-tRNA to the A-site of ribosomes during protein biosynthesis. The sequence is that of Elongation factor Tu 1 from Acidovorax sp. (strain JS42).